The primary structure comprises 500 residues: NAD(P)H-quinone oxidoreductase chain 4, chloroplastic (500 aa).

14 helical membrane-spanning segments follow: residues 4-24, 35-55, 87-107, 113-130, 134-154, 167-187, 208-228, 242-262, 274-294, 305-325, 330-350, 386-406, 411-431, and 462-482; these read FPWLTIIVVFPIFAGSLIFFL, YTICICILELLLTTYAFCYHF, IGPILLTGFITTLATLAAWPV, LFHFLMLAMYSGQIGSFS, LLLFFIMWELELIPVYLLLCM, FILYTAGGSVFLLMGVLGLAL, VLEIIFYIGFFIAFAVKSPII, HYSTCMLLAGILLKMGAYGLI, SIFSPWLMIIGTIQIIYAALT, IAYSSVSHMGFIIIGISSLTD, GALLQIISHGFIGAALFFLAG, LALPGMSGFVAELIVFFGIIT, LLIPKILITFVMAIGMILTPI, and LFLSISIFLPVIGIGIYPDFV.

It belongs to the complex I subunit 4 family.

It localises to the plastid. Its subcellular location is the chloroplast thylakoid membrane. It catalyses the reaction a plastoquinone + NADH + (n+1) H(+)(in) = a plastoquinol + NAD(+) + n H(+)(out). It carries out the reaction a plastoquinone + NADPH + (n+1) H(+)(in) = a plastoquinol + NADP(+) + n H(+)(out). The chain is NAD(P)H-quinone oxidoreductase chain 4, chloroplastic (ndhD) from Nicotiana tabacum (Common tobacco).